The primary structure comprises 395 residues: GPI-anchor transamidase (395 aa).

The N-terminal stretch at 1-27 (MAVTDSLSRAATVLATVLLLSFGSVAA) is a signal peptide. Residues 28–368 (SHIEDQAEQF…PKLKDWHPPG (341 aa)) are Lumenal-facing. Residues D79, I82, E118, and D120 each contribute to the Ca(2+) site. The active-site Proton donor is the H164. C206 serves as the catalytic Nucleophile; acyl-thioester intermediate. Residues C206, S232, and S234 each contribute to the a protein site. The interval 231 to 236 (DSLSHQ) is autoinhibitory loop. C275 and C280 are joined by a disulfide. A helical membrane pass occupies residues 369–385 (GFILGLWALIIMVFFKT). The Cytoplasmic portion of the chain corresponds to 386 to 395 (YGIKHMKFIF).

The protein belongs to the peptidase C13 family. In terms of assembly, heteropentamer. Part of the GPI-anchor transamidase complex, consisting of PIGK, PIGT, PIGS, PIGU and GAA1. Interacts with GPAA1. Interacts with PIGT; this interaction, via a disulfide link, stabilizes the expression of GAA1 and PIGK and links them to PIGS. The disulfide bond between PIGK/GPI8 and PIGT is important for normal enzyme activity.

The protein resides in the endoplasmic reticulum membrane. Its pathway is glycolipid biosynthesis; glycosylphosphatidylinositol-anchor biosynthesis. With respect to regulation, in the absence of proproteins substrates, exists in an inactive state with a disrupted catalytic site by an autoinhibitory loop. The binding of proprotein substrates, particularly the CSP region, to GPI-T triggers concerted conformational changes that alleviate the inhibition by the autoinhibitory loop. Meanwhile, proprotein residues near the omega- site induce the formation of a catalytic cleft for catalysis, following which the products are released and GPI-T reverts to the inactive state. Its function is as follows. Catalytic subunit of the glycosylphosphatidylinositol-anchor (GPI-anchor) transamidase (GPI-T) complex that catalyzes the formation of the linkage between a proprotein and a GPI-anchor and participates in GPI anchored protein biosynthesis. Recognizes diverse proproteins at a C-terminal signal peptide (CSP) region that lacks consensus sequence and replaces it with a GPI-anchor via a transamidation reaction. Transamidation catalysis reaction follows a two-phase mechanism. In the acyl-enzyme phase, the carbonyl group of the proproteins's omega-site undergoes a nucleophilic attack forming an enzyme-substrate thioester bond. Followed by a general acid catalysis that allows CSP releasing, regenerating the carbonyl, and forming the acyl-enzyme intermediate. In the GPI-anchor attachment phase, the amino group of the GPI-anchor's ethanolamine phosphate, the one on third mannose (EtNP3), mediates a nucleophilic attack on the carbonyl of the acyl-enzyme intermediate, replacing the CSP, allowing GPI-anchor attachment to the omega-residue, therefore forming the product and freeing the enzyme. The protein is GPI-anchor transamidase of Homo sapiens (Human).